A 219-amino-acid chain; its full sequence is Proteasome subunit beta (219 aa).

A propeptide spans 1-14 (removed in mature form; by autocatalysis); the sequence is MISNSEYHKEYMKG. Thr-15 acts as the Nucleophile in catalysis.

This sequence belongs to the peptidase T1B family. As to quaternary structure, the 20S proteasome core is composed of 14 alpha and 14 beta subunits that assemble into four stacked heptameric rings, resulting in a barrel-shaped structure. The two inner rings, each composed of seven catalytic beta subunits, are sandwiched by two outer rings, each composed of seven alpha subunits. The catalytic chamber with the active sites is on the inside of the barrel. Has a gated structure, the ends of the cylinder being occluded by the N-termini of the alpha-subunits. Is capped at one or both ends by the proteasome regulatory ATPase, PAN.

Its subcellular location is the cytoplasm. The catalysed reaction is Cleavage of peptide bonds with very broad specificity.. Its activity is regulated as follows. The formation of the proteasomal ATPase PAN-20S proteasome complex, via the docking of the C-termini of PAN into the intersubunit pockets in the alpha-rings, triggers opening of the gate for substrate entry. Interconversion between the open-gate and close-gate conformations leads to a dynamic regulation of the 20S proteasome proteolysis activity. Functionally, component of the proteasome core, a large protease complex with broad specificity involved in protein degradation. This chain is Proteasome subunit beta, found in Methanococcus maripaludis (strain C5 / ATCC BAA-1333).